The following is a 302-amino-acid chain: Zinc transporter ZIP1 (302 aa).

The Extracellular segment spans residues 1 to 6; it reads MDYLLQ. Residues 7–27 form a helical membrane-spanning segment; that stretch reads VKVGALVGLLLLTLFFGFIPA. Residues 28–44 are Cytoplasmic-facing; that stretch reads RMKWFHVTGGTELHKAV. The helical transmembrane segment at 45-65 threads the bilayer; sequence LSFVSCFAGGVFLSACLLDII. The Extracellular segment spans residues 66-86; the sequence is PDYLSDIHGELQKRDLDDGFP. Residues 87–107 traverse the membrane as a helical segment; it reads LPEFIMACGFFTVLILEKMVL. Residues 108–158 lie on the Cytoplasmic side of the membrane; it reads SCTEGHRNEETAPLLAPAAPNGHAHGHPSVNDLEGSGHHVHVDFHAHSSFR. The chain crosses the membrane as a helical span at residues 159 to 179; it reads SFMLFLSLSLHSVFEGLAIGL. Residues 180–185 lie on the Extracellular side of the membrane; it reads QTTNAK. The chain crosses the membrane as a helical span at residues 186 to 206; it reads VLEICIAILVHKSIIVFSLSV. Residues 207–219 are Cytoplasmic-facing; it reads KLVQSAVKPLWVV. The helical transmembrane segment at 220–240 threads the bilayer; it reads LYVTVFAIMSPLGIGIGIVVI. At 241–247 the chain is on the extracellular side; the sequence is ETERQAG. The helical transmembrane segment at 248-268 threads the bilayer; the sequence is GLIQAVLEGLAAGTFIYITFL. Residues 269 to 281 lie on the Cytoplasmic side of the membrane; the sequence is EILPHELNSSERP. Residues 282–302 form a helical membrane-spanning segment; it reads LLKVLFLLCGFSIMAALCFLG.

It belongs to the ZIP transporter (TC 2.A.5) family. In terms of tissue distribution, ubiquitous. Highest levels in ovary, high levels in heart, eye, kidney and brain, moderate levels in intestine and low levels in gill and skin.

The protein localises to the cell membrane. It localises to the endoplasmic reticulum membrane. The enzyme catalyses Zn(2+)(in) = Zn(2+)(out). In terms of biological role, transporter for the divalent cation Zn(2+). Mediates the influx of Zn(2+) into cells from extracellular space. The polypeptide is Zinc transporter ZIP1 (slc39a1) (Danio rerio (Zebrafish)).